The sequence spans 321 residues: tRNA(Ile)-lysidine synthase (321 aa).

21-26 contributes to the ATP binding site; sequence SYGSDS.

The protein belongs to the tRNA(Ile)-lysidine synthase family.

The protein resides in the cytoplasm. The catalysed reaction is cytidine(34) in tRNA(Ile2) + L-lysine + ATP = lysidine(34) in tRNA(Ile2) + AMP + diphosphate + H(+). In terms of biological role, ligates lysine onto the cytidine present at position 34 of the AUA codon-specific tRNA(Ile) that contains the anticodon CAU, in an ATP-dependent manner. Cytidine is converted to lysidine, thus changing the amino acid specificity of the tRNA from methionine to isoleucine. The sequence is that of tRNA(Ile)-lysidine synthase from Campylobacter jejuni subsp. jejuni serotype O:2 (strain ATCC 700819 / NCTC 11168).